A 497-amino-acid chain; its full sequence is Peptidoglycan endopeptidase RipA (497 aa).

An N-terminal signal peptide occupies residues 1–39 (MRRTVRALATRVHGRVCAVPLVVGMLLATALYGGGPAAA). Residues 177 to 192 (ARLAKEKADQAARDAE) are compositionally biased toward basic and acidic residues. Disordered stretches follow at residues 177–198 (ARLAKEKADQAARDAESSQDNA) and 253–297 (APAA…GQNW). Pro residues predominate over residues 255 to 273 (AAAPAPVPNSAPAPVPGAQ). Residues 365–497 (REAVEYVIRR…TPYVTRLIEY (133 aa)) form the NlpC/P60 domain. Catalysis depends on Cys-408, which acts as the Nucleophile. His-457 acts as the Proton acceptor in catalysis. The active site involves Glu-469.

It belongs to the peptidase C40 family. In terms of assembly, monomer.

Its subcellular location is the secreted. Peptidoglycan endopeptidase that cleaves the bond between D-glutamate and meso-diaminopimelate. Binds and degrades high-molecular weight peptidoglycan. Required for normal separation of daughter cells after cell division and for cell wall integrity. This Mycolicibacterium smegmatis (strain ATCC 700084 / mc(2)155) (Mycobacterium smegmatis) protein is Peptidoglycan endopeptidase RipA (ripA).